The sequence spans 320 residues: Dipeptide transport system permease protein DppC (320 aa).

Transmembrane regions (helical) follow at residues 56 to 76, 121 to 141, 154 to 176, 230 to 252, 267 to 287, and 289 to 309; these read LAMAGLFILLFLFVMAVIGPF, LFVGVMAALIDFLIGVIYGGV, MRIIEVLYGLPYLLVVILLMVLM, LLPNTMGAIIVQMTLTVPAAIFA, FASWGVMANDGLPTILSGHWW, and LFFPAFFISLTMYAFNVLGDG. The region spanning 117-307 is the ABC transmembrane type-1 domain; sequence ARISLFVGVM…LTMYAFNVLG (191 aa).

This sequence belongs to the binding-protein-dependent transport system permease family. OppBC subfamily.

It is found in the cell membrane. Probably part of the ABC transporter DppBCDE involved in dipeptide transport. Responsible for the translocation of the substrate across the membrane. The chain is Dipeptide transport system permease protein DppC (dppC) from Bacillus subtilis (strain 168).